Reading from the N-terminus, the 168-residue chain is Photosystem I assembly protein Ycf3 (168 aa).

TPR repeat units lie at residues 35–68, 72–105, and 120–153; these read AFTY…EIDP, SYIL…NPFL, and GEQA…TPGN.

The protein belongs to the Ycf3 family.

It is found in the plastid. Its subcellular location is the chloroplast thylakoid membrane. Its function is as follows. Essential for the assembly of the photosystem I (PSI) complex. May act as a chaperone-like factor to guide the assembly of the PSI subunits. The protein is Photosystem I assembly protein Ycf3 of Phalaenopsis aphrodite subsp. formosana (Moth orchid).